The following is a 246-amino-acid chain: Transcription factor MYB113 (246 aa).

2 HTH myb-type domains span residues proline 5–isoleucine 61 and lysine 62–histidine 112. 2 consecutive DNA-binding regions (H-T-H motif) follow at residues tryptophan 33–leucine 57 and tryptophan 85–leucine 108.

As to quaternary structure, interacts with BHLH002/EGL3/MYC146, BHLH012/MYC1 and BHLH042/TT8.

The protein localises to the nucleus. Functionally, transcription activator, when associated with BHLH002/EGL3/MYC146, BHLH012/MYC1, or BHLH042/TT8. The chain is Transcription factor MYB113 (MYB113) from Arabidopsis thaliana (Mouse-ear cress).